Here is a 243-residue protein sequence, read N- to C-terminus: Urease accessory protein UreF 2 (243 aa).

The protein belongs to the UreF family. UreD, UreF and UreG form a complex that acts as a GTP-hydrolysis-dependent molecular chaperone, activating the urease apoprotein by helping to assemble the nickel containing metallocenter of UreC. The UreE protein probably delivers the nickel.

The protein localises to the cytoplasm. Functionally, required for maturation of urease via the functional incorporation of the urease nickel metallocenter. This Brucella suis (strain ATCC 23445 / NCTC 10510) protein is Urease accessory protein UreF 2.